Here is a 331-residue protein sequence, read N- to C-terminus: tRNA-cytidine(32) 2-sulfurtransferase (331 aa).

Residues 73 to 78 carry the PP-loop motif motif; that stretch reads SGGKDS. [4Fe-4S] cluster-binding residues include cysteine 148, cysteine 151, and cysteine 239.

It belongs to the TtcA family. In terms of assembly, homodimer. Mg(2+) is required as a cofactor. The cofactor is [4Fe-4S] cluster.

The protein resides in the cytoplasm. It carries out the reaction cytidine(32) in tRNA + S-sulfanyl-L-cysteinyl-[cysteine desulfurase] + AH2 + ATP = 2-thiocytidine(32) in tRNA + L-cysteinyl-[cysteine desulfurase] + A + AMP + diphosphate + H(+). Its pathway is tRNA modification. Catalyzes the ATP-dependent 2-thiolation of cytidine in position 32 of tRNA, to form 2-thiocytidine (s(2)C32). The sulfur atoms are provided by the cysteine/cysteine desulfurase (IscS) system. The sequence is that of tRNA-cytidine(32) 2-sulfurtransferase from Burkholderia mallei (strain NCTC 10247).